The sequence spans 155 residues: Small ribosomal subunit protein uS7 (155 aa).

Belongs to the universal ribosomal protein uS7 family. Part of the 30S ribosomal subunit. Contacts proteins S9 and S11.

Its function is as follows. One of the primary rRNA binding proteins, it binds directly to 16S rRNA where it nucleates assembly of the head domain of the 30S subunit. Is located at the subunit interface close to the decoding center, probably blocks exit of the E-site tRNA. The polypeptide is Small ribosomal subunit protein uS7 (Petrotoga mobilis (strain DSM 10674 / SJ95)).